The sequence spans 600 residues: NADH-quinone oxidoreductase subunit C/D (600 aa).

The interval Met1–Gln190 is NADH dehydrogenase I subunit C. The segment at Asp214 to Arg600 is NADH dehydrogenase I subunit D.

The protein in the N-terminal section; belongs to the complex I 30 kDa subunit family. In the C-terminal section; belongs to the complex I 49 kDa subunit family. As to quaternary structure, NDH-1 is composed of 13 different subunits. Subunits NuoB, CD, E, F, and G constitute the peripheral sector of the complex.

The protein resides in the cell inner membrane. It carries out the reaction a quinone + NADH + 5 H(+)(in) = a quinol + NAD(+) + 4 H(+)(out). Functionally, NDH-1 shuttles electrons from NADH, via FMN and iron-sulfur (Fe-S) centers, to quinones in the respiratory chain. The immediate electron acceptor for the enzyme in this species is believed to be ubiquinone. Couples the redox reaction to proton translocation (for every two electrons transferred, four hydrogen ions are translocated across the cytoplasmic membrane), and thus conserves the redox energy in a proton gradient. The protein is NADH-quinone oxidoreductase subunit C/D of Escherichia coli O127:H6 (strain E2348/69 / EPEC).